A 314-amino-acid chain; its full sequence is Galectin-12 (314 aa).

2 consecutive Galectin domains span residues Y27–L161 and C190–C314.

Its subcellular location is the nucleus. Its function is as follows. Binds lactose. May participate in the apoptosis of adipocytes. This Mus musculus (Mouse) protein is Galectin-12 (Lgals12).